The chain runs to 670 residues: Probable potassium transport system protein Kup 1 (670 aa).

Transmembrane regions (helical) follow at residues 14-34 (GAGF…SPLY), 58-78 (LSLI…WIAL), 101-121 (WLII…ALTP), 147-167 (LPIV…QRFG), 175-195 (FGPV…INLF), 196-216 (GDFS…LLSP), 220-240 (AGIF…ALYS), 252-272 (VSWP…GAWL), 294-314 (LIIF…QALI), 345-365 (LYIP…VVYF), 374-394 (AYGL…TVYL), 403-423 (VLVG…FAAS), and 427-447 (FMHG…VMAI).

This sequence belongs to the HAK/KUP transporter (TC 2.A.72) family.

The protein resides in the cell membrane. The enzyme catalyses K(+)(in) + H(+)(in) = K(+)(out) + H(+)(out). Functionally, transport of potassium into the cell. Likely operates as a K(+):H(+) symporter. This is Probable potassium transport system protein Kup 1 from Lactococcus lactis subsp. lactis (strain IL1403) (Streptococcus lactis).